A 64-amino-acid polypeptide reads, in one-letter code: Beta-defensin 1 (64 aa).

The first 22 residues, 1-22, serve as a signal peptide directing secretion; it reads MRLHHLLLVLFFVVLSAGSGFT. 3 disulfide bridges follow: Cys-31–Cys-60, Cys-38–Cys-53, and Cys-43–Cys-61.

This sequence belongs to the beta-defensin family. As to quaternary structure, monomer. Homodimer.

It localises to the secreted. The protein resides in the membrane. In terms of biological role, has bactericidal activity. May act as a ligand for C-C chemokine receptor CCR6. Positively regulates the sperm motility and bactericidal activity in a CCR6-dependent manner. Binds to CCR6 and triggers Ca2+ mobilization in the sperm which is important for its motility. In Ovis aries (Sheep), this protein is Beta-defensin 1 (DEFB1).